The chain runs to 488 residues: 3-octaprenyl-4-hydroxybenzoate carboxy-lyase (488 aa).

N172 is a binding site for Mn(2+). Residues I175–R177, R189–L191, and R194–G195 each bind prenylated FMN. Position 238 (E238) interacts with Mn(2+). Catalysis depends on D287, which acts as the Proton donor.

The protein belongs to the UbiD family. In terms of assembly, homohexamer. The cofactor is prenylated FMN. Mn(2+) serves as cofactor.

The protein localises to the cell membrane. It catalyses the reaction a 4-hydroxy-3-(all-trans-polyprenyl)benzoate + H(+) = a 2-(all-trans-polyprenyl)phenol + CO2. Its pathway is cofactor biosynthesis; ubiquinone biosynthesis. In terms of biological role, catalyzes the decarboxylation of 3-octaprenyl-4-hydroxy benzoate to 2-octaprenylphenol, an intermediate step in ubiquinone biosynthesis. The polypeptide is 3-octaprenyl-4-hydroxybenzoate carboxy-lyase (Azotobacter vinelandii (strain DJ / ATCC BAA-1303)).